The sequence spans 107 residues: Putative pterin-4-alpha-carbinolamine dehydratase (107 aa).

Belongs to the pterin-4-alpha-carbinolamine dehydratase family.

It catalyses the reaction (4aS,6R)-4a-hydroxy-L-erythro-5,6,7,8-tetrahydrobiopterin = (6R)-L-erythro-6,7-dihydrobiopterin + H2O. The polypeptide is Putative pterin-4-alpha-carbinolamine dehydratase (Paracoccus denitrificans (strain Pd 1222)).